The chain runs to 207 residues: Protein N-terminal glutamine amidohydrolase (207 aa).

Residues C30, H83, and D99 contribute to the active site.

This sequence belongs to the NTAQ1 family. As to quaternary structure, monomer.

It localises to the cytoplasm. The protein localises to the cytosol. It is found in the nucleus. The catalysed reaction is N-terminal L-glutaminyl-[protein] + H2O = N-terminal L-glutamyl-[protein] + NH4(+). Mediates the side-chain deamidation of N-terminal glutamine residues to glutamate, an important step in N-end rule pathway of protein degradation. Conversion of the resulting N-terminal glutamine to glutamate renders the protein susceptible to arginylation, polyubiquitination and degradation as specified by the N-end rule. Does not act on substrates with internal or C-terminal glutamine and does not act on non-glutamine residues in any position. Does not deaminate acetylated N-terminal glutamine. With the exception of proline, all tested second-position residues on substrate peptides do not greatly influence the activity. In contrast, a proline at position 2, virtually abolishes deamidation of N-terminal glutamine. The protein is Protein N-terminal glutamine amidohydrolase (Ntaq1) of Rattus norvegicus (Rat).